The following is a 93-amino-acid chain: UPF0298 protein LMHCC_0506 (93 aa).

Belongs to the UPF0298 family.

It localises to the cytoplasm. The polypeptide is UPF0298 protein LMHCC_0506 (Listeria monocytogenes serotype 4a (strain HCC23)).